Here is a 629-residue protein sequence, read N- to C-terminus: Embryonic polyadenylate-binding protein A (629 aa).

RRM domains are found at residues 11–89, 99–175, 191–268, and 294–370; these read ASLY…WSQR, GNVF…HFKS, TNVY…RAQK, and VNLY…LAQR. The PABC domain maps to 539–616; it reads QEPLTASLLA…AVAVLQAHQA (78 aa).

This sequence belongs to the polyadenylate-binding protein type-1 family. As to quaternary structure, interacts with dazl in an RNA-independent manner. The C-terminus can self-associate and also interact with the C-terminus of pabpc1, independently of RNA. RRM 1 and RRM 2 interact with both eif4g1 and paip1, and the C-terminus also interacts with paip1. Prior to oocyte maturation, found in a complex with dazl and pum2 proteins and spdy1 mRNA; pum2 dissociates from the complex during maturation. Interacts with the translation termination factor sup35/erf3. Expressed in adult testis, but at a reduced level compared to oocytes.

The protein localises to the cytoplasm. Its function is as follows. Binds and protects the poly(A) tail of mRNA with or without an AU-rich element (ARE) and prevents mRNA deadenylation. Stimulates the translation of mRNAs to which it is bound during early development. The protein is Embryonic polyadenylate-binding protein A (epabp-a) of Xenopus laevis (African clawed frog).